Here is a 234-residue protein sequence, read N- to C-terminus: Carboxy-S-adenosyl-L-methionine synthase (234 aa).

S-adenosyl-L-methionine is bound by residues Y35, 60–62 (GCS), 83–84 (DN), 109–110 (DI), N124, and R191.

The protein belongs to the class I-like SAM-binding methyltransferase superfamily. Cx-SAM synthase family. Homodimer.

The enzyme catalyses prephenate + S-adenosyl-L-methionine = carboxy-S-adenosyl-L-methionine + 3-phenylpyruvate + H2O. Catalyzes the conversion of S-adenosyl-L-methionine (SAM) to carboxy-S-adenosyl-L-methionine (Cx-SAM). This Campylobacter hominis (strain ATCC BAA-381 / DSM 21671 / CCUG 45161 / LMG 19568 / NCTC 13146 / CH001A) protein is Carboxy-S-adenosyl-L-methionine synthase.